A 222-amino-acid chain; its full sequence is Phosphoribosylformylglycinamidine synthase subunit PurQ (222 aa).

The Glutamine amidotransferase type-1 domain maps to 3 to 222; it reads AAVVVFPGSN…RALAGALTPA (220 aa). The active-site Nucleophile is Cys86. Catalysis depends on residues His194 and Glu196.

As to quaternary structure, part of the FGAM synthase complex composed of 1 PurL, 1 PurQ and 2 PurS subunits.

The protein resides in the cytoplasm. The enzyme catalyses N(2)-formyl-N(1)-(5-phospho-beta-D-ribosyl)glycinamide + L-glutamine + ATP + H2O = 2-formamido-N(1)-(5-O-phospho-beta-D-ribosyl)acetamidine + L-glutamate + ADP + phosphate + H(+). It carries out the reaction L-glutamine + H2O = L-glutamate + NH4(+). Its pathway is purine metabolism; IMP biosynthesis via de novo pathway; 5-amino-1-(5-phospho-D-ribosyl)imidazole from N(2)-formyl-N(1)-(5-phospho-D-ribosyl)glycinamide: step 1/2. Part of the phosphoribosylformylglycinamidine synthase complex involved in the purines biosynthetic pathway. Catalyzes the ATP-dependent conversion of formylglycinamide ribonucleotide (FGAR) and glutamine to yield formylglycinamidine ribonucleotide (FGAM) and glutamate. The FGAM synthase complex is composed of three subunits. PurQ produces an ammonia molecule by converting glutamine to glutamate. PurL transfers the ammonia molecule to FGAR to form FGAM in an ATP-dependent manner. PurS interacts with PurQ and PurL and is thought to assist in the transfer of the ammonia molecule from PurQ to PurL. The protein is Phosphoribosylformylglycinamidine synthase subunit PurQ of Ruegeria pomeroyi (strain ATCC 700808 / DSM 15171 / DSS-3) (Silicibacter pomeroyi).